We begin with the raw amino-acid sequence, 584 residues long: Protein spire homolog 1 (584 aa).

The interval 1–30 (MANTVEADGSNDEGYEAAEEGPEDEEDEKR) is disordered. The 73-residue stretch at 1–73 (MANTVEADGS…RALFAETMEL (73 aa)) folds into the KIND domain. Positions 9-28 (GSNDEGYEAAEEGPEDEEDE) are enriched in acidic residues. Positions 71-99 (MELHTFLAKVKSAKENLKKIQEMEKSDES) form a coiled coil. 2 WH2 domains span residues 147-165 (PYEMLMDDIRCKRYTLRKV) and 211-228 (LHERILEEIKAERKLRPV). The span at 224-238 (KLRPVSPEEIRRSRL) shows a compositional bias: basic and acidic residues. The segment at 224 to 366 (KLRPVSPEEI…PTNVRQFLPP (143 aa)) is disordered. Ser-229 carries the post-translational modification Phosphoserine. Residues 242-272 (TPESTKNLMESSMVNGGLTSQTKENGLSSAE) show a composition bias toward polar residues. Phosphoserine is present on residues Ser-292, Ser-293, and Ser-295. The span at 302–320 (KSTSSSSVSPSFPEEPVLE) shows a compositional bias: low complexity. Residue Thr-337 is modified to Phosphothreonine. A compositionally biased stretch (basic and acidic residues) spans 340–356 (PERRQPPQRRHSIEKET). The segment covering 357–366 (PTNVRQFLPP) has biased composition (polar residues). Residues 384–404 (LALTVEEVMHIRQVLVKAELE) form a spir-box region. Residues Ser-506, Ser-510, and Ser-563 each carry the phosphoserine modification.

This sequence belongs to the spire family. In terms of assembly, interacts with FMN2.

It localises to the cytoplasm. Its subcellular location is the cytoskeleton. The protein resides in the cytosol. It is found in the cleavage furrow. The protein localises to the perinuclear region. It localises to the cell membrane. Its subcellular location is the cytoplasmic vesicle membrane. In terms of biological role, acts as an actin nucleation factor, remains associated with the slow-growing pointed end of the new filament. Involved in intracellular vesicle transport along actin fibers, providing a novel link between actin cytoskeleton dynamics and intracellular transport. Required for asymmetric spindle positioning and asymmetric cell division during meiosis. Required for normal formation of the cleavage furrow and for polar body extrusion during female germ cell meiosis. Also acts in the nucleus: together with FMN2, promotes assembly of nuclear actin filaments in response to DNA damage in order to facilitate movement of chromatin and repair factors after DNA damage. In addition, promotes innate immune signaling downstream of dsRNA sensing. Mechanistically, contributes to IRF3 phosphorylation and activation downstream of MAVS and upstream of TBK1. The chain is Protein spire homolog 1 (SPIRE1) from Macaca fascicularis (Crab-eating macaque).